Reading from the N-terminus, the 307-residue chain is MLYDRFGRPVTNLRISLTQECNYRCFFCHREGQRFLAKNELTPEEIERLVRIASRLGIRKVKLTGGEPTVREDILEIVKRIKPYVIDLSMTTNGSRLKELAKPLAKAGLDRVNVSLHSLKPEVYKRITGVDGLEAVLEGIEEAVKYLSPVKLNMTVMKGLNDGEIWDMVEFAAKTGTILQLIELEAPREMAETAFFRKYFYPLKPVEEKLEKLAVETKERRMHRRKKYFIPTDYGIAEVEVVRAMHNTVFCANCTRLRVTSDGKFKTCLLRNNDLIDFLSAMRNGASDEEIVEIFKRAVLMREPYWK.

One can recognise a Radical SAM core domain in the interval 5–231 (RFGRPVTNLR…MHRRKKYFIP (227 aa)). Residue R14 coordinates GTP. [4Fe-4S] cluster is bound by residues C21, C25, and C28. K62 contributes to the GTP binding site. Residue G66 participates in S-adenosyl-L-methionine binding. T91 is a GTP binding site. An S-adenosyl-L-methionine-binding site is contributed by S115. K151 contacts GTP. Position 190 (M190) interacts with S-adenosyl-L-methionine. C251 and C254 together coordinate [4Fe-4S] cluster. Residue 256–258 (RLR) participates in GTP binding. Residue C268 participates in [4Fe-4S] cluster binding.

It belongs to the radical SAM superfamily. MoaA family. The cofactor is [4Fe-4S] cluster.

The catalysed reaction is GTP + AH2 + S-adenosyl-L-methionine = (8S)-3',8-cyclo-7,8-dihydroguanosine 5'-triphosphate + 5'-deoxyadenosine + L-methionine + A + H(+). The protein operates within cofactor biosynthesis; molybdopterin biosynthesis. In terms of biological role, catalyzes the cyclization of GTP to (8S)-3',8-cyclo-7,8-dihydroguanosine 5'-triphosphate. The sequence is that of Probable GTP 3',8-cyclase from Thermococcus kodakarensis (strain ATCC BAA-918 / JCM 12380 / KOD1) (Pyrococcus kodakaraensis (strain KOD1)).